Here is a 305-residue protein sequence, read N- to C-terminus: Tyrosine recombinase XerC (305 aa).

In terms of domain architecture, Core-binding (CB) spans 4-95 (TSIQALINKW…AVKNFYRFLE (92 aa)). The Tyr recombinase domain occupies 116 to 298 (LLPKALSEDD…SIKHLEAVYT (183 aa)). Active-site residues include Arg-159, Lys-182, His-250, Arg-253, and His-276. Tyr-285 functions as the O-(3'-phospho-DNA)-tyrosine intermediate in the catalytic mechanism.

It belongs to the 'phage' integrase family. XerC subfamily. As to quaternary structure, forms a cyclic heterotetrameric complex composed of two molecules of XerC and two molecules of XerD.

It localises to the cytoplasm. In terms of biological role, site-specific tyrosine recombinase, which acts by catalyzing the cutting and rejoining of the recombining DNA molecules. The XerC-XerD complex is essential to convert dimers of the bacterial chromosome into monomers to permit their segregation at cell division. It also contributes to the segregational stability of plasmids. The chain is Tyrosine recombinase XerC from Rickettsia massiliae (strain Mtu5).